The chain runs to 396 residues: NADH-quinone oxidoreductase subunit D (396 aa).

It belongs to the complex I 49 kDa subunit family. As to quaternary structure, NDH-1 is composed of 14 different subunits. Subunits NuoB, C, D, E, F, and G constitute the peripheral sector of the complex.

It is found in the cell inner membrane. The catalysed reaction is a quinone + NADH + 5 H(+)(in) = a quinol + NAD(+) + 4 H(+)(out). Its function is as follows. NDH-1 shuttles electrons from NADH, via FMN and iron-sulfur (Fe-S) centers, to quinones in the respiratory chain. The immediate electron acceptor for the enzyme in this species is believed to be ubiquinone. Couples the redox reaction to proton translocation (for every two electrons transferred, four hydrogen ions are translocated across the cytoplasmic membrane), and thus conserves the redox energy in a proton gradient. The protein is NADH-quinone oxidoreductase subunit D of Bartonella tribocorum (strain CIP 105476 / IBS 506).